The following is a 110-amino-acid chain: MASNLLKALIRSQILPSSRRNFSVATTQLGIPTDDLVGNHTAKWMQDRSKKSPMELISEVPPIKVDGRIVACEGDTNPALGHPIEFICLDLNEPAICKYCGLRYVQDHHH.

A mitochondrion-targeting transit peptide spans 1 to 22; sequence MASNLLKALIRSQILPSSRRNF.

It belongs to the complex I NDUFS6 subunit family. In terms of assembly, complex I is composed of at least 49 different subunits. This is a component of the iron-sulfur (IP) fragment of the enzyme.

Its subcellular location is the mitochondrion inner membrane. Its function is as follows. Accessory subunit of the mitochondrial membrane respiratory chain NADH dehydrogenase (Complex I), that is believed not to be involved in catalysis. Complex I functions in the transfer of electrons from NADH to the respiratory chain. The immediate electron acceptor for the enzyme is believed to be ubiquinone. This is NADH dehydrogenase [ubiquinone] iron-sulfur protein 6, mitochondrial from Arabidopsis thaliana (Mouse-ear cress).